Here is a 217-residue protein sequence, read N- to C-terminus: MFALVVPPYPVNVAVQTISPTKYCFQFENRVQAKEFTLFLTDIQKFTPGYNAAIYLAYQPFTDWKYLGFINSNKPSIICKIPSETLDNNNNNNNNNNNNNNINNGFINNINSIIPTEIIQIGISIETDLEIQSKPPIEQQQQQQQQQQQQQNTSSTSINNFIKTEEFKQVAFKLCDNLVNYILSFSTSNNTVPSSSINKWYENFQKKLKNDQLDFLK.

The protein belongs to the OPI10 family.

This is Protein OPI10 homolog from Dictyostelium discoideum (Social amoeba).